The sequence spans 467 residues: Ribosome biogenesis protein YTM1 (467 aa).

Residues 8–95 form a ubiquitin-like (UBL) domain region; the sequence is IKIKFFTNEE…ETFLSLEYTR (88 aa). A sufficient for interaction with ERB1 and association with 66S pre-ribosomes region spans residues 105–467; the sequence is SFNNEDWISS…QINKGSDISK (363 aa). WD repeat units lie at residues 120 to 159, 161 to 199, 216 to 255, 293 to 333, 335 to 374, 382 to 422, and 432 to 467; these read KTLPSVTLSNMMISQPKILSGSYDGIVRTYNMSGNVEKQY, GHSGPIRAVKWVSPTRIVSAGNDRQVRLWKTSADDGSIP, GHKAPVVALAVENTSNRILSAGYDHSIGFWSTNYKEMTTI, SHTQ…CIDT, STGYSLLSIVQLPKSKLLATGSSARHINLHDPRISNNTTE, GHTN…SLYT, and KGADKVFAVSWDNEIGIISGGQDKKIQINKGSDISK.

The protein belongs to the WD repeat WDR12/YTM1 family. As to quaternary structure, component of the NOP7 complex, composed of ERB1, NOP7 and YTM1. The complex is held together by ERB1, which interacts with NOP7 via its N-terminal domain and with YTM1 via a high-affinity interaction between the seven-bladed beta-propeller domains of the 2 proteins. The NOP7 complex associates with the 66S pre-ribosome. Interacts (via UBL domain) with MDN1 (via VWFA/MIDAS domain).

It is found in the nucleus. Its subcellular location is the nucleolus. The protein resides in the nucleoplasm. In terms of biological role, component of the NOP7 complex, which is required for maturation of the 25S and 5.8S ribosomal RNAs and formation of the 60S ribosome. The sequence is that of Ribosome biogenesis protein YTM1 from Scheffersomyces stipitis (strain ATCC 58785 / CBS 6054 / NBRC 10063 / NRRL Y-11545) (Yeast).